Here is a 458-residue protein sequence, read N- to C-terminus: UDP-N-acetylmuramate--L-alanine ligase (458 aa).

An ATP-binding site is contributed by 115-121 (GSHGKTT).

This sequence belongs to the MurCDEF family.

It is found in the cytoplasm. It catalyses the reaction UDP-N-acetyl-alpha-D-muramate + L-alanine + ATP = UDP-N-acetyl-alpha-D-muramoyl-L-alanine + ADP + phosphate + H(+). It participates in cell wall biogenesis; peptidoglycan biosynthesis. In terms of biological role, cell wall formation. The protein is UDP-N-acetylmuramate--L-alanine ligase of Anaeromyxobacter dehalogenans (strain 2CP-C).